Here is a 660-residue protein sequence, read N- to C-terminus: MTTIIELPEVLANQIAAGEVIERPASVVKELVENAIDAKSSQITVEIEESGLKMIQITDNGEGMSHEDLPLSLRRHATSKIKSQSDLFRIRTLGFRGEALPSVASISKLTIKTATADAEHGSILVASGGKIEQLEAVSTPVGTKIKVENLFYNTPARLKYMKSLQAELAHVVDVVNRLSLAHPEIAFTLISDGKQLTQTSGAGDLRQALAGIYGLNTAKKMIDISSADLDFEVGGFVSLPELTRANRNYITILINGRYIKNFLLNRAILDGYGSKLMVGRFPIAVIDIQIDPYLADVNVHPTKQEIRISKERELMALISTAISESLREQDLIPDALENLARSSTRSFSKPEQTSLPLQPSQLYYDPQKNDFFTKETVVSEDSPQGFNHETLVDSGVKQVDNLQLAKTESEAAAPSVKYASRPDPMLSDGEHPGLDVHNKQKLSQMLDRLENEEQSVFPELDYFGQMHGTYLFAQGRDGLFIIDQHAAQERVKYEYYRDKIGEVDNSLQQLLVPYLFEFSGSDFINLQEKMSLLNEVGIYLEPYGNHTFILREHPIWMKEAEIESGVYEMCDMLLLTNEVSIKTYRAELAIMMSCKRSIKANHSLDDYSARQLLLQLAQCKNPYNCPHGRPVLINFSKADMEKMFRRIQENHTSLRELGKY.

It belongs to the DNA mismatch repair MutL/HexB family.

In terms of biological role, this protein is involved in the repair of mismatches in DNA. It is required for dam-dependent methyl-directed DNA mismatch repair. May act as a 'molecular matchmaker', a protein that promotes the formation of a stable complex between two or more DNA-binding proteins in an ATP-dependent manner without itself being part of a final effector complex. This chain is DNA mismatch repair protein MutL, found in Streptococcus equi subsp. equi (strain 4047).